Consider the following 170-residue polypeptide: MNRLPPVALVFLGGALGAIIRWTLTVWIPALGDPTRVLGAATPLNIIGGIPLGDIALLVVNVLGALLLGLLVGMIPDSAHPRRTFWGTGVLGGFTSFSSLAAAVDATTDSASTILIGGTYGVFTLALGLIAAAMGLRLGRDLNELARLRRAADGADEPQDPHEPHKGGAR.

The next 4 helical transmembrane spans lie at 8–28 (ALVF…TVWI), 55–75 (IALL…VGMI), 84–104 (TFWG…AAAV), and 114–134 (ILIG…AAAM). Na(+)-binding residues include Gly92 and Thr95.

Belongs to the fluoride channel Fluc/FEX (TC 1.A.43) family.

It localises to the cell membrane. The catalysed reaction is fluoride(in) = fluoride(out). With respect to regulation, na(+) is not transported, but it plays an essential structural role and its presence is essential for fluoride channel function. Functionally, fluoride-specific ion channel. Important for reducing fluoride concentration in the cell, thus reducing its toxicity. This chain is Fluoride-specific ion channel FluC 2, found in Corynebacterium jeikeium (strain K411).